The chain runs to 279 residues: MEAVGKHVKLFWNVYSDYAVLIAISLSYFVFDVLMLPFTRQFSLEDITISHPFALHEQVPTKYLGIICVFFPALVLYGFGKLRNNSLLFWKSLMGLLYSTMVCGLCVSLLKNAVGRPRPDFLARCQPFESTPKTGLVDVLSCSVPWSDKVLQDGFRSFPSGHTSFSFAGLGFLAIFLAGQLKMFRNKTSSWKVVVPLVPLSIASWIGLSRSQDYRHHKEDIAVGALFGFAIAYVVYRQLFPPLDHHNADILYVQAELDEGYTNVHSAGNSSATNAEQMV.

The Lumenal portion of the chain corresponds to 1 to 17 (MEAVGKHVKLFWNVYSD). Residues 18-38 (YAVLIAISLSYFVFDVLMLPF) form a helical membrane-spanning segment. At 39–58 (TRQFSLEDITISHPFALHEQ) the chain is on the cytoplasmic side. The chain crosses the membrane as a helical span at residues 59-79 (VPTKYLGIICVFFPALVLYGF). The Lumenal segment spans residues 80 to 86 (GKLRNNS). Residues 87 to 107 (LLFWKSLMGLLYSTMVCGLCV) form a helical membrane-spanning segment. The Cytoplasmic segment spans residues 108 to 163 (SLLKNAVGRPRPDFLARCQPFESTPKTGLVDVLSCSVPWSDKVLQDGFRSFPSGHT). The tract at residues 111-119 (KNAVGRPRP) is phosphatase sequence motif I. Residues 159–162 (PSGH) form a phosphatase sequence motif II region. Residues 164–184 (SFSFAGLGFLAIFLAGQLKMF) traverse the membrane as a helical segment. Residues 185-187 (RNK) are Lumenal-facing. The helical transmembrane segment at 188 to 208 (TSSWKVVVPLVPLSIASWIGL) threads the bilayer. The Cytoplasmic segment spans residues 209–220 (SRSQDYRHHKED). Residues 209–220 (SRSQDYRHHKED) are phosphatase sequence motif III. A helical transmembrane segment spans residues 221-241 (IAVGALFGFAIAYVVYRQLFP). Over 242–279 (PLDHHNADILYVQAELDEGYTNVHSAGNSSATNAEQMV) the chain is Lumenal.

It belongs to the PA-phosphatase related phosphoesterase family.

Its subcellular location is the vacuole membrane. The protein localises to the endoplasmic reticulum membrane. It carries out the reaction a 1,2-diacyl-sn-glycerol 3-diphosphate + H2O = a 1,2-diacyl-sn-glycero-3-phosphate + phosphate + H(+). It catalyses the reaction a 1,2-diacyl-sn-glycero-3-phosphate + H2O = a 1,2-diacyl-sn-glycerol + phosphate. Catalyzes the dephosphorylation of diacylglycerol phosphate (DGPP) to phosphatidate (PA) and the subsequent dephosphorylation of PA to diacylglycerol (DAG). In Schizosaccharomyces pombe (strain 972 / ATCC 24843) (Fission yeast), this protein is Probable diacylglycerol pyrophosphate phosphatase 1 (dpp1).